A 307-amino-acid polypeptide reads, in one-letter code: 1D-myo-inositol 2-acetamido-2-deoxy-alpha-D-glucopyranoside deacetylase 1 (307 aa).

Zn(2+) is bound by residues histidine 21, aspartate 24, and histidine 157.

This sequence belongs to the MshB deacetylase family. Zn(2+) is required as a cofactor.

The enzyme catalyses 1D-myo-inositol 2-acetamido-2-deoxy-alpha-D-glucopyranoside + H2O = 1D-myo-inositol 2-amino-2-deoxy-alpha-D-glucopyranoside + acetate. In terms of biological role, catalyzes the deacetylation of 1D-myo-inositol 2-acetamido-2-deoxy-alpha-D-glucopyranoside (GlcNAc-Ins) in the mycothiol biosynthesis pathway. The chain is 1D-myo-inositol 2-acetamido-2-deoxy-alpha-D-glucopyranoside deacetylase 1 from Frankia casuarinae (strain DSM 45818 / CECT 9043 / HFP020203 / CcI3).